A 589-amino-acid polypeptide reads, in one-letter code: Arginine--tRNA ligase (589 aa).

The short motif at 131 to 141 (ANPTGPLHVGH) is the 'HIGH' region element.

The protein belongs to the class-I aminoacyl-tRNA synthetase family. Monomer.

It is found in the cytoplasm. The enzyme catalyses tRNA(Arg) + L-arginine + ATP = L-arginyl-tRNA(Arg) + AMP + diphosphate. The polypeptide is Arginine--tRNA ligase (Legionella pneumophila subsp. pneumophila (strain Philadelphia 1 / ATCC 33152 / DSM 7513)).